Reading from the N-terminus, the 775-residue chain is Semaphorin-3E (775 aa).

The first 25 residues, 1–25 (MAPAGHILTLLLWGHLLELWTPGHS), serve as a signal peptide directing secretion. The Sema domain maps to 32–516 (RLRLSHKELL…SASAVAQVRF (485 aa)). An N-linked (GlcNAc...) asparagine glycan is attached at Asn44. An intrachain disulfide couples Cys105 to Cys115. Residue Asn126 is glycosylated (N-linked (GlcNAc...) asparagine). The cysteines at positions 133 and 142 are disulfide-linked. N-linked (GlcNAc...) asparagine glycans are attached at residues Asn175 and Asn330. 3 disulfide bridges follow: Cys270/Cys382, Cys294/Cys342, and Cys519/Cys537. The Ig-like C2-type domain occupies 581 to 669 (ALDRTEERLA…NFVHTVRKIT (89 aa)). Asn596 carries N-linked (GlcNAc...) asparagine glycosylation. Cys654 and Cys729 form a disulfide bridge.

The protein belongs to the semaphorin family. In terms of assembly, interacts with PLXND1. In terms of tissue distribution, detected in neurons in the thalamus. Detected in embryonic vasculature. Developing lungs, developing skeletal elements and ventral horns of the developing neural tube. Correlates positively with tumor progression.

The protein resides in the secreted. Functionally, plays an important role in signaling via the cell surface receptor PLXND1. Mediates reorganization of the actin cytoskeleton, leading to the retraction of cell projections. Promotes focal adhesion disassembly and inhibits adhesion of endothelial cells to the extracellular matrix. Regulates angiogenesis, both during embryogenesis and after birth. Can down-regulate sprouting angiogenesis. Required for normal vascular patterning during embryogenesis. Plays an important role in ensuring the specificity of synapse formation. The chain is Semaphorin-3E (Sema3e) from Mus musculus (Mouse).